Consider the following 419-residue polypeptide: GTPase Obg (419 aa).

The Obg domain occupies M1–M156. Positions A157–I334 constitute an OBG-type G domain. Residues G163–S170, F188–V192, D209–G212, N278–D281, and N315–I317 contribute to the GTP site. Mg(2+)-binding residues include S170 and T190. One can recognise an OCT domain in the interval I342–N419.

The protein belongs to the TRAFAC class OBG-HflX-like GTPase superfamily. OBG GTPase family. As to quaternary structure, monomer. Mg(2+) is required as a cofactor.

It localises to the cytoplasm. Its function is as follows. An essential GTPase which binds GTP, GDP and possibly (p)ppGpp with moderate affinity, with high nucleotide exchange rates and a fairly low GTP hydrolysis rate. Plays a role in control of the cell cycle, stress response, ribosome biogenesis and in those bacteria that undergo differentiation, in morphogenesis control. The protein is GTPase Obg of Mesomycoplasma hyopneumoniae (strain 7448) (Mycoplasma hyopneumoniae).